The primary structure comprises 89 residues: UPF0335 protein OCAR_5086/OCA5_c28780 (89 aa).

Belongs to the UPF0335 family.

This chain is UPF0335 protein OCAR_5086/OCA5_c28780, found in Afipia carboxidovorans (strain ATCC 49405 / DSM 1227 / KCTC 32145 / OM5) (Oligotropha carboxidovorans).